The primary structure comprises 414 residues: Tyrosine--tRNA ligase (414 aa).

Tyrosine 38 is a binding site for L-tyrosine. Residues 43-52 (CTARSLHIGS) carry the 'HIGH' region motif. L-tyrosine contacts are provided by tyrosine 172 and glutamine 176. The 'KMSKS' region signature appears at 232 to 236 (KMGKT). Lysine 235 contacts ATP. The 68-residue stretch at 345-412 (ISVAKLLQLA…GKKRRIKVVV (68 aa)) folds into the S4 RNA-binding domain.

It belongs to the class-I aminoacyl-tRNA synthetase family. TyrS type 1 subfamily. In terms of assembly, homodimer.

It is found in the cytoplasm. It catalyses the reaction tRNA(Tyr) + L-tyrosine + ATP = L-tyrosyl-tRNA(Tyr) + AMP + diphosphate + H(+). In terms of biological role, catalyzes the attachment of tyrosine to tRNA(Tyr) in a two-step reaction: tyrosine is first activated by ATP to form Tyr-AMP and then transferred to the acceptor end of tRNA(Tyr). This Anaplasma marginale (strain St. Maries) protein is Tyrosine--tRNA ligase.